Consider the following 201-residue polypeptide: Adenylyl-sulfate kinase (201 aa).

Residue 35–42 (GLSGSGKS) coordinates ATP. Serine 109 (phosphoserine intermediate) is an active-site residue.

Belongs to the APS kinase family.

The enzyme catalyses adenosine 5'-phosphosulfate + ATP = 3'-phosphoadenylyl sulfate + ADP + H(+). It functions in the pathway sulfur metabolism; hydrogen sulfide biosynthesis; sulfite from sulfate: step 2/3. In terms of biological role, catalyzes the synthesis of activated sulfate. This is Adenylyl-sulfate kinase from Bacteroides thetaiotaomicron (strain ATCC 29148 / DSM 2079 / JCM 5827 / CCUG 10774 / NCTC 10582 / VPI-5482 / E50).